Here is a 164-residue protein sequence, read N- to C-terminus: Large ribosomal subunit protein eL24 (164 aa).

Disordered stretches follow at residues Lys-63–Ser-82 and Glu-117–Ala-164. Residues Lys-71–Tyr-81 are compositionally biased toward basic residues. A compositionally biased stretch (basic and acidic residues) spans Glu-117 to Val-133.

This sequence belongs to the eukaryotic ribosomal protein eL24 family.

Its subcellular location is the cytoplasm. The protein is Large ribosomal subunit protein eL24 (RPL24) of Cicer arietinum (Chickpea).